Reading from the N-terminus, the 220-residue chain is MNILIFGPPGSGKSTQARRITERYGLTYISSGDIIRAEISSRTPLGLEMEKYLSRGDLIPDTIVNTLIISKLRRVRENFIMDGYPRTPEQVIALENYLYDHGIKIDVAIDIFITKEESVRRISGRRICSKCGAVYHIEFNPPKIPGKCDICGGDLIQRPDDRPEIVEKRYDIYMRNMEPIIKFYQKQGIYVKIDGHGSINEVWERIRPLLDYIYNTRSRR.

Residue 10 to 15 (GSGKST) participates in ATP binding. Residues 30–59 (SSGDIIRAEISSRTPLGLEMEKYLSRGDLI) form an NMP region. AMP contacts are provided by residues serine 31, arginine 36, 57–59 (DLI), 83–86 (GYPR), and glutamine 90. The LID stretch occupies residues 124–161 (GRRICSKCGAVYHIEFNPPKIPGKCDICGGDLIQRPDD). Residue arginine 125 coordinates ATP. Positions 128 and 131 each coordinate Zn(2+). An ATP-binding site is contributed by 134–135 (VY). 2 residues coordinate Zn(2+): cysteine 148 and cysteine 151. 2 residues coordinate AMP: arginine 158 and arginine 169. Glycine 197 contacts ATP.

The protein belongs to the adenylate kinase family. In terms of assembly, monomer.

Its subcellular location is the cytoplasm. It carries out the reaction AMP + ATP = 2 ADP. It participates in purine metabolism; AMP biosynthesis via salvage pathway; AMP from ADP: step 1/1. In terms of biological role, catalyzes the reversible transfer of the terminal phosphate group between ATP and AMP. Plays an important role in cellular energy homeostasis and in adenine nucleotide metabolism. The chain is Adenylate kinase from Pyrococcus horikoshii (strain ATCC 700860 / DSM 12428 / JCM 9974 / NBRC 100139 / OT-3).